The chain runs to 256 residues: Small ribosomal subunit protein uS2 (256 aa).

This sequence belongs to the universal ribosomal protein uS2 family.

The chain is Small ribosomal subunit protein uS2 from Methylococcus capsulatus (strain ATCC 33009 / NCIMB 11132 / Bath).